A 102-amino-acid polypeptide reads, in one-letter code: Protein translation factor SUI1 homolog (102 aa).

The protein belongs to the SUI1 family.

This Methanosarcina acetivorans (strain ATCC 35395 / DSM 2834 / JCM 12185 / C2A) protein is Protein translation factor SUI1 homolog.